A 406-amino-acid chain; its full sequence is Cysteine desulfurase (406 aa).

K226 is modified (N6-(pyridoxal phosphate)lysine). C364 acts as the Cysteine persulfide intermediate in catalysis.

This sequence belongs to the class-V pyridoxal-phosphate-dependent aminotransferase family. Csd subfamily. As to quaternary structure, homodimer. Interacts with SufE and the SufBCD complex composed of SufB, SufC and SufD. The interaction with SufE is required to mediate the direct transfer of the sulfur atom from the S-sulfanylcysteine. Pyridoxal 5'-phosphate serves as cofactor.

The protein localises to the cytoplasm. The enzyme catalyses (sulfur carrier)-H + L-cysteine = (sulfur carrier)-SH + L-alanine. It carries out the reaction L-selenocysteine + AH2 = hydrogenselenide + L-alanine + A + H(+). The protein operates within cofactor biosynthesis; iron-sulfur cluster biosynthesis. Functionally, cysteine desulfurases mobilize the sulfur from L-cysteine to yield L-alanine, an essential step in sulfur metabolism for biosynthesis of a variety of sulfur-containing biomolecules. Component of the suf operon, which is activated and required under specific conditions such as oxidative stress and iron limitation. Acts as a potent selenocysteine lyase in vitro, that mobilizes selenium from L-selenocysteine. Selenocysteine lyase activity is however unsure in vivo. The chain is Cysteine desulfurase from Enterobacter sp. (strain 638).